Consider the following 541-residue polypeptide: Carboxypeptidase Y homolog A (541 aa).

The signal sequence occupies residues 1 to 17 (MKLLMTGLLASAAVAAA). Residues 18-122 (QEQQVLQAEG…KLQSYDLRVK (105 aa)) constitute a propeptide that is removed on maturation. 5 cysteine pairs are disulfide-bonded: Cys-177/Cys-417, Cys-311/Cys-325, Cys-335/Cys-358, Cys-342/Cys-351, and Cys-380/Cys-387. An N-linked (GlcNAc...) asparagine glycan is attached at Asn-208. Ser-264 is a catalytic residue. Residue Asp-456 is part of the active site. Residue Asn-507 is glycosylated (N-linked (GlcNAc...) asparagine). Residue His-518 is part of the active site.

This sequence belongs to the peptidase S10 family.

It is found in the vacuole. It catalyses the reaction Release of a C-terminal amino acid with broad specificity.. Functionally, vacuolar carboxypeptidase involved in degradation of small peptides. Digests preferentially peptides containing an aliphatic or hydrophobic residue in P1' position, as well as methionine, leucine or phenylalanine in P1 position of ester substrate. This Arthroderma otae (strain ATCC MYA-4605 / CBS 113480) (Microsporum canis) protein is Carboxypeptidase Y homolog A (CPYA).